The chain runs to 281 residues: Lectin alpha chain (281 aa).

Residues Asn-35, Asn-82, and Asn-140 are each glycosylated (N-linked (GlcNAc...) asparagine).

The protein belongs to the leguminous lectin family. Tetramer of 2 alpha and 2 beta chains. In terms of processing, glycosylated. The beta chain is produced by partial proteolytic processing of the alpha chain.

Functionally, D-galactose-binding lectin. The protein is Lectin alpha chain of Lablab purpureus (Hyacinth bean).